Consider the following 551-residue polypeptide: Hyaluronan synthase 2 (551 aa).

Residues 1–11 (MHCERFICILR) are Cytoplasmic-facing. A helical membrane pass occupies residues 12–32 (IIGTTLFGVSLLLGISAAYIV). The Extracellular segment spans residues 33–45 (GYQFIQTDNYYFS). The helical transmembrane segment at 46–66 (FGLYGAILALHLIIQSLFAFL) threads the bilayer. Residues 67-374 (EHRKMKRSLE…NSLWFHKHHL (308 aa)) are Cytoplasmic-facing. Residues 375–395 (WMTYEAVITGFFPFFLIATVI) form a helical membrane-spanning segment. Topologically, residues 396 to 402 (QLFYRGR) are extracellular. The chain crosses the membrane as a helical span at residues 403-423 (IWNILLFLLTVQLVGLIKSSF). At 424-429 (ASALRG) the chain is on the cytoplasmic side. Residues 430–450 (NIVMVFMSFYSVLYMSSLLPA) form a helical membrane-spanning segment. Over 451 to 470 (KMFAIATINKAGWGTSGRKT) the chain is Extracellular. The chain crosses the membrane as a helical span at residues 471–491 (IVVNFIGLIPITVWFTILLGG). Topologically, residues 492–509 (VCYTIWRETKKPFSESEK) are cytoplasmic. Residues 510 to 530 (IVLAVGAILYACYWVMLLTMY) traverse the membrane as a helical segment. The Extracellular portion of the chain corresponds to 531–551 (VSLVMKCGRRRKEPQHDLVLA).

It belongs to the NodC/HAS family. As to quaternary structure, homodimer; dimerization promotes enzymatic activity. Requires Mg(2+) as cofactor.

The protein resides in the cell membrane. It localises to the endoplasmic reticulum membrane. The protein localises to the vesicle. It is found in the golgi apparatus membrane. Its subcellular location is the lysosome. It catalyses the reaction [hyaluronan](n) + UDP-N-acetyl-alpha-D-glucosamine = N-acetyl-beta-D-glucosaminyl-(1-&gt;4)-[hyaluronan](n) + UDP + H(+). The enzyme catalyses N-acetyl-beta-D-glucosaminyl-(1-&gt;4)-[hyaluronan](n) + UDP-alpha-D-glucuronate = [hyaluronan](n+1) + UDP + H(+). It functions in the pathway glycan biosynthesis; hyaluronan biosynthesis. Catalyzes the addition of GlcNAc or GlcUA monosaccharides to the nascent hyaluronan polymer. Therefore, it is essential to hyaluronan synthesis a major component of most extracellular matrices that has a structural role in tissues architectures and regulates cell adhesion, migration and differentiation. This is one of three isoenzymes responsible for cellular hyaluronan synthesis and it is particularly responsible for the synthesis of high molecular mass hyaluronan. The polypeptide is Hyaluronan synthase 2 (has2) (Xenopus laevis (African clawed frog)).